Reading from the N-terminus, the 256-residue chain is Thiazole synthase (256 aa).

The active-site Schiff-base intermediate with DXP is the Lys-96. Residues Gly-157, 183–184 (AG), and 205–206 (NT) contribute to the 1-deoxy-D-xylulose 5-phosphate site.

Belongs to the ThiG family. As to quaternary structure, homotetramer. Forms heterodimers with either ThiH or ThiS.

The protein localises to the cytoplasm. The catalysed reaction is [ThiS sulfur-carrier protein]-C-terminal-Gly-aminoethanethioate + 2-iminoacetate + 1-deoxy-D-xylulose 5-phosphate = [ThiS sulfur-carrier protein]-C-terminal Gly-Gly + 2-[(2R,5Z)-2-carboxy-4-methylthiazol-5(2H)-ylidene]ethyl phosphate + 2 H2O + H(+). It functions in the pathway cofactor biosynthesis; thiamine diphosphate biosynthesis. Its function is as follows. Catalyzes the rearrangement of 1-deoxy-D-xylulose 5-phosphate (DXP) to produce the thiazole phosphate moiety of thiamine. Sulfur is provided by the thiocarboxylate moiety of the carrier protein ThiS. In vitro, sulfur can be provided by H(2)S. This Bacillus mycoides (strain KBAB4) (Bacillus weihenstephanensis) protein is Thiazole synthase.